A 78-amino-acid polypeptide reads, in one-letter code: Cytochrome c-551 (78 aa).

Cys-14, Cys-17, His-18, and Met-55 together coordinate heme c.

Binds 1 heme c group covalently per subunit.

In Halorhodospira halophila (Ectothiorhodospira halophila), this protein is Cytochrome c-551.